The following is a 311-amino-acid chain: tRNA dimethylallyltransferase (311 aa).

13–20 (GPTASGKT) contacts ATP. 15-20 (TASGKT) lines the substrate pocket. Interaction with substrate tRNA regions lie at residues 38-41 (DSMQ) and 166-170 (QRVLR).

The protein belongs to the IPP transferase family. As to quaternary structure, monomer. Requires Mg(2+) as cofactor.

The enzyme catalyses adenosine(37) in tRNA + dimethylallyl diphosphate = N(6)-dimethylallyladenosine(37) in tRNA + diphosphate. Functionally, catalyzes the transfer of a dimethylallyl group onto the adenine at position 37 in tRNAs that read codons beginning with uridine, leading to the formation of N6-(dimethylallyl)adenosine (i(6)A). In Staphylococcus aureus (strain Mu3 / ATCC 700698), this protein is tRNA dimethylallyltransferase.